A 131-amino-acid chain; its full sequence is Profilin-2 (131 aa).

It belongs to the profilin family. As to quaternary structure, occurs in many kinds of cells as a complex with monomeric actin in a 1:1 ratio.

The protein resides in the cytoplasm. The protein localises to the cytoskeleton. Functionally, binds to actin and affects the structure of the cytoskeleton. At high concentrations, profilin prevents the polymerization of actin, whereas it enhances it at low concentrations. By binding to PIP2, it inhibits the formation of IP3 and DG. The sequence is that of Profilin-2 from Malus domestica (Apple).